The primary structure comprises 254 residues: Pyridoxine 5'-phosphate synthase (254 aa).

Residue N12 coordinates 3-amino-2-oxopropyl phosphate. 14–15 (DH) contributes to the 1-deoxy-D-xylulose 5-phosphate binding site. A 3-amino-2-oxopropyl phosphate-binding site is contributed by R23. H48 (proton acceptor) is an active-site residue. R50 and H55 together coordinate 1-deoxy-D-xylulose 5-phosphate. The Proton acceptor role is filled by E75. T105 provides a ligand contact to 1-deoxy-D-xylulose 5-phosphate. Catalysis depends on H199, which acts as the Proton donor. 3-amino-2-oxopropyl phosphate-binding positions include G200 and 221-222 (GF).

This sequence belongs to the PNP synthase family. As to quaternary structure, homooctamer; tetramer of dimers.

It is found in the cytoplasm. It carries out the reaction 3-amino-2-oxopropyl phosphate + 1-deoxy-D-xylulose 5-phosphate = pyridoxine 5'-phosphate + phosphate + 2 H2O + H(+). Its pathway is cofactor biosynthesis; pyridoxine 5'-phosphate biosynthesis; pyridoxine 5'-phosphate from D-erythrose 4-phosphate: step 5/5. Functionally, catalyzes the complicated ring closure reaction between the two acyclic compounds 1-deoxy-D-xylulose-5-phosphate (DXP) and 3-amino-2-oxopropyl phosphate (1-amino-acetone-3-phosphate or AAP) to form pyridoxine 5'-phosphate (PNP) and inorganic phosphate. The chain is Pyridoxine 5'-phosphate synthase from Rhodopseudomonas palustris (strain TIE-1).